Reading from the N-terminus, the 316-residue chain is Cytochrome c biogenesis protein CcsA (316 aa).

8 helical membrane passes run 19-39, 47-67, 77-97, 106-126, 151-171, 224-244, 258-275, and 285-305; these read VLTLGSLAFVLILISLPFSFW, SSIVRILIASANILLAIQLVF, ISNLYESLCFLTWGLTFIQLL, LIQAALTPISLLSIAFASFVL, VIMCSYAALLIGSLLSLVVLL, TITFGFLLLTFGLISGAVWAN, TWAFISWLIYAAYLHTRL, and AIIAIIGLFIILICYIGVNFL.

This sequence belongs to the CcmF/CycK/Ccl1/NrfE/CcsA family. May interact with ccs1.

The protein localises to the cellular thylakoid membrane. Functionally, required during biogenesis of c-type cytochromes (cytochrome c6 and cytochrome f) at the step of heme attachment. The sequence is that of Cytochrome c biogenesis protein CcsA from Prochlorococcus marinus (strain SARG / CCMP1375 / SS120).